The chain runs to 224 residues: MADS-box transcription factor 16 (224 aa).

The MADS-box domain maps to 1 to 61 (MGRGKIEIKR…GKYHEFCSPS (61 aa)). Residues 84–174 (YENMQRTLSH…QQELGLREEP (91 aa)) enclose the K-box domain.

May interact with the K-box of MADS4, MADS6 and MADS8. May form a heterodimer with MADS4. Expressed in lodicules, stamens and carpels.

It is found in the nucleus. Functionally, probable transcription factor involved in the development of floral organs. Required for normal development of lodicules and stamens (whorls 2 and 3). May function as a heterodimer with MADS4. This is MADS-box transcription factor 16 (MADS16) from Oryza sativa subsp. japonica (Rice).